We begin with the raw amino-acid sequence, 214 residues long: Endoplasmic reticulum vesicle protein 25 (214 aa).

Residues 1–20 form the signal peptide; it reads MRSISTLLFIISTFISLVSA. Over 21–183 the chain is Lumenal; it reads LQLAIPATTN…TNESTNSRVK (163 aa). The 92-residue stretch at 33–124 folds into the GOLD domain; it reads PFCIRDFVQE…VREIELDVES (92 aa). The helical transmembrane segment at 184-204 threads the bilayer; that stretch reads WFSILVITSLVGLGAWQVQYL. Topologically, residues 205 to 214 are cytoplasmic; it reads RHYFKVKHII.

The protein belongs to the EMP24/GP25L family.

The protein resides in the endoplasmic reticulum membrane. The protein localises to the golgi apparatus membrane. Its function is as follows. Constituent of COPII-coated endoplasmic reticulum-derived transport vesicles. Required for efficient transport of a subset of secretory proteins to the Golgi. Facilitates retrograde transport from the Golgi to the endoplasmic reticulum. This chain is Endoplasmic reticulum vesicle protein 25 (ERV25), found in Debaryomyces hansenii (strain ATCC 36239 / CBS 767 / BCRC 21394 / JCM 1990 / NBRC 0083 / IGC 2968) (Yeast).